The following is a 168-amino-acid chain: CDP-archaeol synthase (168 aa).

Helical transmembrane passes span 4–24, 51–71, 81–101, 112–132, and 138–158; these read IFEAFWYILPAYFANSSPVVL, GFFGGITVGTVVGTIQHLMFP, VGVAFLLSLGALVGDLIGSFI, PAVGLDQWGFLISALCFAYPL, and GEVLFLLVVTPVIHWLANVFA.

Belongs to the CDP-archaeol synthase family. Requires Mg(2+) as cofactor.

The protein resides in the cell membrane. It catalyses the reaction 2,3-bis-O-(geranylgeranyl)-sn-glycerol 1-phosphate + CTP + H(+) = CDP-2,3-bis-O-(geranylgeranyl)-sn-glycerol + diphosphate. It functions in the pathway membrane lipid metabolism; glycerophospholipid metabolism. Its function is as follows. Catalyzes the formation of CDP-2,3-bis-(O-geranylgeranyl)-sn-glycerol (CDP-archaeol) from 2,3-bis-(O-geranylgeranyl)-sn-glycerol 1-phosphate (DGGGP) and CTP. This reaction is the third ether-bond-formation step in the biosynthesis of archaeal membrane lipids. This is CDP-archaeol synthase from Pyrococcus abyssi (strain GE5 / Orsay).